The primary structure comprises 190 residues: Heme-binding protein 1 (190 aa).

It belongs to the HEBP family. As to quaternary structure, monomer.

It is found in the cytoplasm. Its function is as follows. May bind free porphyrinogens that may be present in the cell and thus facilitate removal of these potentially toxic compound. Binds with a high affinity to one molecule of heme or porphyrins. It binds metalloporphyrins, free porphyrins and N-methylprotoporphyrin with similar affinities. In Xenopus laevis (African clawed frog), this protein is Heme-binding protein 1 (hebp1).